The sequence spans 241 residues: Chaperone protein HifB (241 aa).

The signal sequence occupies residues Met-1–Asn-27.

This sequence belongs to the periplasmic pilus chaperone family.

Its subcellular location is the periplasm. Its function is as follows. Mediates assembly of pili by forming soluble multimeric complexes with pili subunits as an intermediate step in the assembly process. This protein is involved in type B pili (HifA) assembly. This is Chaperone protein HifB (hifB) from Haemophilus influenzae.